A 121-amino-acid polypeptide reads, in one-letter code: MTSSTSTAATAQAHGRFIRGSVSKVRRVLDQIRGRTYRDALIMLEFMPYRSTGPITKVLRSAVANAENNLGLDPASLVISSASADMGPSMKRYRPRAQGRAFQIKKQTCHISIAVAVQTDS.

It belongs to the universal ribosomal protein uL22 family. Part of the 50S ribosomal subunit.

This protein binds specifically to 23S rRNA; its binding is stimulated by other ribosomal proteins, e.g. L4, L17, and L20. It is important during the early stages of 50S assembly. It makes multiple contacts with different domains of the 23S rRNA in the assembled 50S subunit and ribosome. Its function is as follows. The globular domain of the protein is located near the polypeptide exit tunnel on the outside of the subunit, while an extended beta-hairpin is found that lines the wall of the exit tunnel in the center of the 70S ribosome. The sequence is that of Large ribosomal subunit protein uL22 from Synechococcus sp. (strain CC9902).